Reading from the N-terminus, the 211-residue chain is C-type lectin domain family 2 member L (211 aa).

The tract at residues 1-53 is disordered; that stretch reads MEPAREPPARARPPPPAARPAPAAPRPRSPAEAEARGPEGLLRRSGSGYEGST. The segment covering 10-28 has biased composition (pro residues); it reads RARPPPPAARPAPAAPRPR. Position 29 is a phosphoserine (Ser29). Residues 66–86 traverse the membrane as a helical segment; the sequence is LLLGAIAVLLFAILVVMSILA. Disulfide bonds link Cys97–Cys108, Cys125–Cys205, and Cys184–Cys197. The region spanning 104 to 206 is the C-type lectin domain; the sequence is YGRKCYYFSE…CLTTRPWVCS (103 aa).

It localises to the membrane. In Rattus norvegicus (Rat), this protein is C-type lectin domain family 2 member L (Clec2l).